Reading from the N-terminus, the 340-residue chain is MKVTLLGAGAWGMAMAAQATRHLQEGDVCLWSRSKEQLLDIQESGENRAYLSGIKLPEGLKLEGDFSAAVKRLSIDDLLVIATPMSGLSETIAQVLRVAEHPLNIIWLCKGLEPNTALLPHQVVERESKIHSHGITHSYGALSGPSFAREVGVGMPCALTVASKSPKLCEVVQAAFHHGNMRVYSSDDLIGVELGGAIKNVLAIAAGIGDGLDLGLNARAAVLTRGLAEMMRLVKAAGGKSETCMGLTGVGDLILTATGDLSRNRRVGLELAAGKSLPEILASLGHVAEGVLCAQAVGDLAKRLGIEMPITAMMDEVLSGKLKPHDAVKKLMGRDPKIES.

Residues Trp-11, Arg-33, and Lys-110 each coordinate NADPH. Sn-glycerol 3-phosphate is bound by residues Lys-110, Gly-144, and Ser-146. Ala-148 serves as a coordination point for NADPH. Sn-glycerol 3-phosphate-binding residues include Lys-199, Asp-252, Ser-262, Arg-263, and Asn-264. Lys-199 acts as the Proton acceptor in catalysis. Arg-263 lines the NADPH pocket. The NADPH site is built by Val-287 and Glu-289.

It belongs to the NAD-dependent glycerol-3-phosphate dehydrogenase family.

It localises to the cytoplasm. The catalysed reaction is sn-glycerol 3-phosphate + NAD(+) = dihydroxyacetone phosphate + NADH + H(+). It catalyses the reaction sn-glycerol 3-phosphate + NADP(+) = dihydroxyacetone phosphate + NADPH + H(+). The protein operates within membrane lipid metabolism; glycerophospholipid metabolism. Functionally, catalyzes the reduction of the glycolytic intermediate dihydroxyacetone phosphate (DHAP) to sn-glycerol 3-phosphate (G3P), the key precursor for phospholipid synthesis. In Polynucleobacter necessarius subsp. necessarius (strain STIR1), this protein is Glycerol-3-phosphate dehydrogenase [NAD(P)+].